Consider the following 107-residue polypeptide: Auxin-responsive protein SAUR50 (107 aa).

The protein belongs to the ARG7 family. Interacts with BZR1. As to expression, expressed in cotyledons, leaves, flowers and siliques.

It localises to the cell membrane. Functionally, provide a mechanistic link between auxin and plasma membrane H(+)-ATPases (PM H(+)-ATPases, e.g. AHA1 and AHA2), and triggers PM H(+)-ATPases activity by promoting phosphorylation of their C-terminal autoinhibitory domain as a result of PP2C-D subfamily of type 2C phosphatases inhibition, thus leading to the acidification of the apoplast and the facilitation of solutes and water uptake to drive cell expansion. Triggers plant growth probably by promoting cell elongation. Regulates branch angles and bending. Effector of hormonal and environmental signals in plant growth. In Arabidopsis thaliana (Mouse-ear cress), this protein is Auxin-responsive protein SAUR50.